Reading from the N-terminus, the 772-residue chain is Subtilisin-like protease SBT5.3 (772 aa).

The signal sequence occupies residues 1–25; the sequence is MKLTHNFSFLLLLLLVHMSSKHILA. One can recognise an Inhibitor I9 domain in the interval 31–116; the sequence is SYVVYFGAHS…VFPNKALKLH (86 aa). A Peptidase S8 domain is found at 120–628; sequence SWDFLGLEHN…AGHVQPNLAV (509 aa). The active-site Charge relay system is Asp-153. Asn-211 carries N-linked (GlcNAc...) asparagine glycosylation. His-223 serves as the catalytic Charge relay system. N-linked (GlcNAc...) asparagine glycans are attached at residues Asn-246, Asn-306, and Asn-396. A PA domain is found at 398–480; that stretch reads SALDAQLCKL…KDSFAVSRYI (83 aa). Ser-561 acts as the Charge relay system in catalysis. 5 N-linked (GlcNAc...) asparagine glycosylation sites follow: Asn-606, Asn-651, Asn-662, Asn-684, and Asn-725.

The protein belongs to the peptidase S8 family. Expressed specifically at sites of lateral root emergence.

It is found in the secreted. The protein resides in the cell wall. In terms of biological role, serine protease. Has a substrate preference for the hydrophobic residues Phe and Ala and the basic residue Asp in the P1 position, and for Asp, Leu or Ala in the P1' position. May play a role in the degradation of structural proteins in the extracellular matrix of cells located above sites of lateral root formation and thus facilitate lateral root emergence. This Arabidopsis thaliana (Mouse-ear cress) protein is Subtilisin-like protease SBT5.3 (AIR3).